The chain runs to 185 residues: Small ribosomal subunit protein uS5 (185 aa).

The region spanning phenylalanine 18–valine 81 is the S5 DRBM domain. The interval serine 157–aspartate 185 is disordered. Basic and acidic residues predominate over residues arginine 176 to aspartate 185.

It belongs to the universal ribosomal protein uS5 family. As to quaternary structure, part of the 30S ribosomal subunit. Contacts proteins S4 and S8.

In terms of biological role, with S4 and S12 plays an important role in translational accuracy. Its function is as follows. Located at the back of the 30S subunit body where it stabilizes the conformation of the head with respect to the body. The sequence is that of Small ribosomal subunit protein uS5 from Xanthobacter autotrophicus (strain ATCC BAA-1158 / Py2).